A 150-amino-acid polypeptide reads, in one-letter code: Troponin C, isoform 1 (150 aa).

Met1 bears the N-acetylmethionine mark. EF-hand domains lie at Asp7–Lys42, Ile43–Glu78, Ala83–Lys118, and Leu119–Gly150. Residues Asp56, Asp58, Ser60, Glu62, and Glu67 each coordinate Ca(2+). Residues Asp132, Asp134, Ser136, Thr138, and Glu143 each contribute to the Ca(2+) site.

This sequence belongs to the troponin C family.

In terms of biological role, troponin is the central regulatory protein of striated muscle contraction. Tn consists of three components: Tn-I which is the inhibitor of actomyosin ATPase, Tn-T which contains the binding site for tropomyosin and Tn-C. The binding of calcium to Tn-C abolishes the inhibitory action of Tn on actin filaments. The chain is Troponin C, isoform 1 from Homarus americanus (American lobster).